We begin with the raw amino-acid sequence, 595 residues long: Inactive glycosyltransferase 25 family member 3 (595 aa).

The first 22 residues, 1–22 (MRAARAAPLLQLLLLLGPWLEA), serve as a signal peptide directing secretion. N-linked (GlcNAc...) asparagine glycans are attached at residues Asn75, Asn153, Asn237, and Asn360. Residues 548–595 (DTETSSPWDDDSGRLISWSGSQKTLRSPRLDLTGSSGHSLQPQPRDEL) are disordered. A compositionally biased stretch (polar residues) spans 580-589 (TGSSGHSLQP). The short motif at 592–595 (RDEL) is the Prevents secretion from ER element.

The protein belongs to the glycosyltransferase 25 family. As to expression, ubiquitous. Highly expressed in secretory and nervous tissues.

The protein resides in the endoplasmic reticulum lumen. Functionally, probable cell adhesion protein involved in leukocyte transmigration across the blood-brain barrier. Does not express any beta-galactosyltransferase activity in vitro. The polypeptide is Inactive glycosyltransferase 25 family member 3 (CERCAM) (Homo sapiens (Human)).